Reading from the N-terminus, the 367-residue chain is Peptide chain release factor 2 (367 aa).

Gln254 carries the N5-methylglutamine modification.

The protein belongs to the prokaryotic/mitochondrial release factor family. Methylated by PrmC. Methylation increases the termination efficiency of RF2.

It localises to the cytoplasm. Its function is as follows. Peptide chain release factor 2 directs the termination of translation in response to the peptide chain termination codons UGA and UAA. This chain is Peptide chain release factor 2, found in Neisseria gonorrhoeae (strain ATCC 700825 / FA 1090).